We begin with the raw amino-acid sequence, 258 residues long: MSLIDPRAIIDPAARLADDVQVGPWSIIGPDVEIGEGTVIASHVVIKGPTRIGRHNRIYQFSSVGEDTPDLKYKGEPTRLVIGDHNVIREGVTIHRGTVQDRSETTIGDHNLIMAYAHIGHDSVIANHCILVNNTALAGHVHVGDWAILSGYTLVHQFCHIGAHSFSGMGTAIGKDVPAFVTVFGNPAEARSMNFEGMRRRGFSAEAVHALRNAYKIVYRKGLTVEAALSELAESAAAFPEVAIFRDSIQASTRGITR.

It belongs to the transferase hexapeptide repeat family. LpxA subfamily. Homotrimer.

It localises to the cytoplasm. The catalysed reaction is a (3R)-hydroxyacyl-[ACP] + UDP-N-acetyl-alpha-D-glucosamine = a UDP-3-O-[(3R)-3-hydroxyacyl]-N-acetyl-alpha-D-glucosamine + holo-[ACP]. The protein operates within glycolipid biosynthesis; lipid IV(A) biosynthesis; lipid IV(A) from (3R)-3-hydroxytetradecanoyl-[acyl-carrier-protein] and UDP-N-acetyl-alpha-D-glucosamine: step 1/6. Involved in the biosynthesis of lipid A, a phosphorylated glycolipid that anchors the lipopolysaccharide to the outer membrane of the cell. This Stutzerimonas stutzeri (strain A1501) (Pseudomonas stutzeri) protein is Acyl-[acyl-carrier-protein]--UDP-N-acetylglucosamine O-acyltransferase.